Here is a 106-residue protein sequence, read N- to C-terminus: Replication restart protein PriB (106 aa).

Residues 4–103 (TNRLVLSGTV…LHAEQIEFID (100 aa)) enclose the SSB domain.

It belongs to the PriB family. Homodimer. Interacts with PriA and DnaT. Component of the replication restart primosome. Primosome assembly occurs via a 'hand-off' mechanism. PriA binds to replication forks, subsequently PriB then DnaT bind; DnaT then displaces ssDNA to generate the helicase loading substrate.

Involved in the restart of stalled replication forks, which reloads the replicative helicase on sites other than the origin of replication; the PriA-PriB pathway is the major replication restart pathway. During primosome assembly it facilitates complex formation between PriA and DnaT on DNA; stabilizes PriA on DNA. Stimulates the DNA unwinding activity of PriA helicase. The sequence is that of Replication restart protein PriB from Yersinia enterocolitica serotype O:8 / biotype 1B (strain NCTC 13174 / 8081).